A 122-amino-acid chain; its full sequence is Phospholipase A2 crotoxin basic subunit CBb (122 aa).

7 disulfide bridges follow: Cys-26/Cys-115, Cys-28/Cys-44, Cys-43/Cys-95, Cys-49/Cys-122, Cys-50/Cys-88, Cys-57/Cys-81, and Cys-75/Cys-86. Ca(2+) contacts are provided by Tyr-27, Gly-29, and Gly-31. His-47 is a catalytic residue. Asp-48 contacts Ca(2+). Asp-89 is a catalytic residue.

Belongs to the phospholipase A2 family. Group II subfamily. D49 sub-subfamily. Heterodimer of one of the acidic (CA1, CA2, CA3 or CA4) and one of the basic (CBa1, CBa2, CBb, CBc or CBd) subunits; non-covalently linked. The acidic subunit is non-toxic, without enzymatic activity and comprises 3 peptides that are cross-linked by 5 disulfide bridges. The basic subunit is toxic, has phospholipase A2 activity and is composed of a single chain. Multiple variants of each subunit give different crotoxin complexes that can be subdivided into 2 classes: (1) those of high toxicity, low PLA2 activity (CBb, CBc and CBd linked with high affinity to any CA) and high stability (K(d)=4.5 nM) and (2) those of moderate toxicity, high PLA2 activity (CBa2 linked with low affinity to any CA) and low stability (K(d)=25 nM). It depends on Ca(2+) as a cofactor. Expressed by the venom gland.

Its subcellular location is the secreted. It catalyses the reaction a 1,2-diacyl-sn-glycero-3-phosphocholine + H2O = a 1-acyl-sn-glycero-3-phosphocholine + a fatty acid + H(+). Its function is as follows. Heterodimer CA-CB: Crotoxin is a potent presynaptic neurotoxin that possesses phospholipase A2 (PLA2) activity and exerts a lethal action by blocking neuromuscular transmission. It consists of a non-covalent association of a basic and weakly toxic PLA2 subunit (CBa2, CBb, CBc, or CBd), with a small acidic, non-enzymatic and non-toxic subunit (CA1, CA2, CA3 or CA4). The complex acts by binding to a specific 48-kDa protein (R48) receptor located on presynaptic membranes, forming a transient ternary complex CA-CB-R48, followed by dissociation of the CA-CB complex and release of the CA subunit. At equilibrium, only the CB subunits remain associated with the specific crotoxin receptor. In addition to neurotoxicity, crotoxin has been found to exert myotoxicity, nephrotoxicity, and cardiovascular toxicity. Moreover, anti-inflammatory, immunomodulatory, anti-tumor and analgesic effects of crotoxin have also been reported. In terms of biological role, monomer CBb: The basic subunit of crotoxin is a snake venom phospholipase A2 (PLA2) that exhibits weak neurotoxicity (10-fold less than the heterodimer) and strong anticoagulant effects by binding to factor Xa (F10) and inhibiting the prothrombinase activity. In addition, it shows the same effects described for the heterodimer and binds the nucleotide-binding domain (NBD1) of CFTR chloride channels and increases the channel current. PLA2 catalyzes the calcium-dependent hydrolysis of the 2-acyl groups in 3-sn-phosphoglycerides. The polypeptide is Phospholipase A2 crotoxin basic subunit CBb (Crotalus durissus terrificus (South American rattlesnake)).